The chain runs to 204 residues: MSEHVPADEAPEPRLITETGLDRRIADIIEPVIVELGFELVRVRILNQNGMTLQIMAERKDGTMTVEDCEELSMAISPVLDVEDPVDKEYHLEVSSPGIDRPMVRASDFTRWQGNLLKCETSILIDNRKRFRGKIADVTPDGFILERDQVAYGEEPRLTIPFTALAEAKLILTDDLVRDALRADKQAKAAAEAANQNDETGEDQ.

Belongs to the RimP family.

It localises to the cytoplasm. Functionally, required for maturation of 30S ribosomal subunits. In Allorhizobium ampelinum (strain ATCC BAA-846 / DSM 112012 / S4) (Agrobacterium vitis (strain S4)), this protein is Ribosome maturation factor RimP.